The following is a 219-amino-acid chain: Putative germin-like protein 8-1 (219 aa).

The N-terminal stretch at 1–23 is a signal peptide; the sequence is MASFISFLLLAALIGMASWQAIA. Cys-33 and Cys-48 are oxidised to a cystine. 2 N-linked (GlcNAc...) asparagine glycosylation sites follow: Asn-53 and Asn-79. The 153-residue stretch at 63 to 215 folds into the Cupin type-1 domain; the sequence is AMLDKPRDTA…AFQVDKKIID (153 aa). Positions 112, 114, 119, and 160 each coordinate Mn(2+).

The protein belongs to the germin family. In terms of assembly, oligomer (believed to be a pentamer but probably hexamer).

Its subcellular location is the secreted. It localises to the extracellular space. The protein resides in the apoplast. Its function is as follows. Plays a role in broad-spectrum disease resistance. Probably has no oxalate oxidase activity even if the active site is conserved. In Oryza sativa subsp. japonica (Rice), this protein is Putative germin-like protein 8-1.